The primary structure comprises 349 residues: UPF0324 inner membrane protein YeiH (349 aa).

The Periplasmic portion of the chain corresponds to 1-12; it reads MTNITLQKQHRT. A helical membrane pass occupies residues 13 to 32; sequence LWHFIPGLALSAVITGVALW. Residues 33-35 are Cytoplasmic-facing; sequence GGS. Residues 36–58 form a helical membrane-spanning segment; sequence IPAVAGAGFSALTLAILLGMVLG. Residues 59 to 99 lie on the Periplasmic side of the membrane; that stretch reads NTIYPHIWKSCDGGVLFAKQYLLRLGIILYGFRLTFSQIAD. A helical membrane pass occupies residues 100–122; sequence VGISGIIIDVLTLSSTFLLACFL. Residues 123-131 are Cytoplasmic-facing; it reads GQKVFGLDK. Residues 132 to 151 form a helical membrane-spanning segment; it reads HTSWLIGAGSSICGAAAVLA. Residues 152–162 are Periplasmic-facing; sequence TEPVVKAEASK. A helical membrane pass occupies residues 163–185; sequence VTVAVATVVIFGTVAIFLYPAIY. Over 186 to 261 the chain is Cytoplasmic; it reads PLMSQWFSPE…SGANSGEKSK (76 aa). Residues 262 to 283 traverse the membrane as a helical segment; that stretch reads ITIPWFAILFIVVAIFNSFHLL. At 284–289 the chain is on the periplasmic side; sequence PQSVVN. The chain crosses the membrane as a helical span at residues 290 to 312; it reads MLVTLDTFLLAMAMAALGLTTHV. Residues 313–321 lie on the Cytoplasmic side of the membrane; it reads SALKKAGAK. A helical membrane pass occupies residues 322 to 344; the sequence is PLLMALVLFAWLIVGGGAINYVI. Residues 345-349 are Periplasmic-facing; it reads QSVIA.

The protein belongs to the UPF0324 family.

Its subcellular location is the cell inner membrane. The sequence is that of UPF0324 inner membrane protein YeiH (yeiH) from Escherichia coli O157:H7.